The primary structure comprises 408 residues: MSSRRLGVVRPLLQMGLIPQITIGIIAGVLLAVIWPDTAQSVSLLGQLFISALKAVAPILVFALVTAAIANHQQGQPTHIRGVLLLYVIGTLVAAVVAVIASFVFPTELTLELPEVSGNPPGGVVEILRNLLLSAVTNPVSALMEGNFIAILAWAVGLGLMLRQGRDATRQVVNDLSDAISGIVRAVIRFAPLGIFGLVANTLADAGIGALLEYGRLLAVIVGCMLFVALVTNPLIVFLHTRQNPYPLVFACLRGSAITAFFTRSSAANIPVNLNLCDRLGLDPDTYAISIPLGATINMAGAAITISVITLAAANTLGIPVDFPTALLLCVVSSIAACGVSGVAGGSLLLIPLATSLFGISTEVAMQVVAIGFVISVVQDSTETALNSSTDVLFTAAACRSAEVRESA.

Transmembrane regions (helical) follow at residues 15 to 35 (MGLIPQITIGIIAGVLLAVIW), 49 to 69 (FISALKAVAPILVFALVTAAI), 85 to 105 (LLYVIGTLVAAVVAVIASFVF), 142 to 162 (ALMEGNFIAILAWAVGLGLML), 192 to 212 (PLGIFGLVANTLADAGIGALL), 218 to 238 (LAVIVGCMLFVALVTNPLIVF), 246 to 268 (YPLVFACLRGSAITAFFTRSSAA), 289 to 309 (ISIPLGATINMAGAAITISVI), 317 to 337 (LGIPVDFPTALLLCVVSSIAA), and 362 to 382 (TEVAMQVVAIGFVISVVQDST).

Belongs to the dicarboxylate/amino acid:cation symporter (DAACS) (TC 2.A.23) family.

Its subcellular location is the cell inner membrane. It catalyses the reaction L-serine(in) + Na(+)(in) = L-serine(out) + Na(+)(out). The catalysed reaction is L-threonine(in) + Na(+)(in) = L-threonine(out) + Na(+)(out). Involved in the import of serine and threonine into the cell, with the concomitant import of sodium (symport system). This is Serine/threonine transporter SstT from Marinobacter nauticus (strain ATCC 700491 / DSM 11845 / VT8) (Marinobacter aquaeolei).